The sequence spans 464 residues: MKRFMDEDFLLNNQTAKVLYEKYAKDMPIIDFHCHLNPKEIYENKKFRNITEVWLGGDHYKWRLMRANGIEEKYITGSADDYEKFLAWAKTIPMAIGNPIYHWTHLELKRYFGIDEILNEKSAPIIWEKANKVLEELGARDIILKSNVEVICTTDDPVDTLEYHLKLKDDKNFNVKVYPTFRPDKGVNIERETFIPWVEKLGEVYGKKIESYDEFLDALKSRAEFFHSVGCRASDHAIDNMVFAEASFDEVANIFKKALAGEKLTEIEVAKYKTYTLRFLGKVYSSLGWAMQLHINALRNNNTRMFNILGPDTGYDSINDGHIALALVKFLDSLEKENSLPKTILYSLNPKDNYVLATIMGSFQDGSIPGKMQLGAAWWFNDSKDGNLQQMKDLANLGLLSRFVGMVTDSRSFLSYARHEYFRRLLCKLIGEWVENGEYPYDLEALSRIVQGVCYYNAKEYFGF.

The protein belongs to the metallo-dependent hydrolases superfamily. Uronate isomerase family.

It catalyses the reaction D-glucuronate = D-fructuronate. The catalysed reaction is aldehydo-D-galacturonate = keto-D-tagaturonate. It participates in carbohydrate metabolism; pentose and glucuronate interconversion. The sequence is that of Uronate isomerase from Caldicellulosiruptor saccharolyticus (strain ATCC 43494 / DSM 8903 / Tp8T 6331).